Reading from the N-terminus, the 481-residue chain is uncharacterized protein (481 aa).

The tract at residues 1-28 (MPQSNHYSHQSRSHNDRRRQQPDEKVQA) is disordered. A TRAM domain is found at 29–87 (TVNIGQRFPLTIRRLGINGEGIGYYKHVITFVKGALPEEVVVAEVTAVHPRYLEAKIRS). Residues glutamine 313, tyrosine 342, aspartate 363, and aspartate 411 each coordinate S-adenosyl-L-methionine. Catalysis depends on cysteine 438, which acts as the Nucleophile.

It belongs to the class I-like SAM-binding methyltransferase superfamily. RNA M5U methyltransferase family.

This is an uncharacterized protein from Lactiplantibacillus plantarum (strain ATCC BAA-793 / NCIMB 8826 / WCFS1) (Lactobacillus plantarum).